The primary structure comprises 228 residues: 7-cyano-7-deazaguanine synthase (228 aa).

An ATP-binding site is contributed by 9–19 (LSGGPDSTTVL). Zn(2+) contacts are provided by C193, C203, C206, and C209.

The protein belongs to the QueC family. Zn(2+) serves as cofactor.

It catalyses the reaction 7-carboxy-7-deazaguanine + NH4(+) + ATP = 7-cyano-7-deazaguanine + ADP + phosphate + H2O + H(+). Its pathway is purine metabolism; 7-cyano-7-deazaguanine biosynthesis. Catalyzes the ATP-dependent conversion of 7-carboxy-7-deazaguanine (CDG) to 7-cyano-7-deazaguanine (preQ(0)). This is 7-cyano-7-deazaguanine synthase from Rickettsia massiliae (strain Mtu5).